The primary structure comprises 388 residues: Chorismate synthase (388 aa).

The NADP(+) site is built by arginine 39 and arginine 45. Residues 130 to 132 (RSS), 251 to 252 (NA), alanine 296, 311 to 315 (KPIPT), and arginine 337 contribute to the FMN site.

The protein belongs to the chorismate synthase family. As to quaternary structure, homotetramer. FMNH2 serves as cofactor.

It carries out the reaction 5-O-(1-carboxyvinyl)-3-phosphoshikimate = chorismate + phosphate. The protein operates within metabolic intermediate biosynthesis; chorismate biosynthesis; chorismate from D-erythrose 4-phosphate and phosphoenolpyruvate: step 7/7. Catalyzes the anti-1,4-elimination of the C-3 phosphate and the C-6 proR hydrogen from 5-enolpyruvylshikimate-3-phosphate (EPSP) to yield chorismate, which is the branch point compound that serves as the starting substrate for the three terminal pathways of aromatic amino acid biosynthesis. This reaction introduces a second double bond into the aromatic ring system. This Streptococcus equi subsp. zooepidemicus (strain MGCS10565) protein is Chorismate synthase.